Here is a 457-residue protein sequence, read N- to C-terminus: Glycine receptor subunit alpha-1 (457 aa).

The first 28 residues, 1–28 (MYSFNTLRLYLWETIVFFSLAASKEAEA), serve as a signal peptide directing secretion. Residues 29-250 (ARSAPKPMSP…RFHLERQMGY (222 aa)) lie on the Extracellular side of the membrane. N-linked (GlcNAc...) asparagine glycosylation occurs at Asn-66. Glycine contacts are provided by Arg-93 and Ser-157. The cysteines at positions 166 and 180 are disulfide-linked. Zn(2+) is bound by residues Glu-220 and Asp-222. A disulfide bond links Cys-226 and Cys-237. A strychnine-binding site is contributed by 230–235 (YNTGKF). Thr-232 contributes to the glycine binding site. Residue His-243 coordinates Zn(2+). A helical transmembrane segment spans residues 251 to 272 (YLIQMYIPSLLIVILSWISFWI). The Cytoplasmic portion of the chain corresponds to 273-277 (NMDAA). A helical membrane pass occupies residues 278 to 298 (PARVGLGITTVLTMTTQSSGS). At 299-309 (RASLPKVSYVK) the chain is on the extracellular side. Residues 310 to 330 (AIDIWMAVCLLFVFSALLEYA) form a helical membrane-spanning segment. Topologically, residues 331–425 (AVNFVSRQHK…FIQRAKKIDK (95 aa)) are cytoplasmic. The segment at 391-410 (KGANNSNTTNPPPAPSKSPE) is disordered. A helical transmembrane segment spans residues 426 to 446 (ISRIGFPMAFLIFNMFYWIIY). The Extracellular segment spans residues 447–457 (KIVRREDVHNQ).

Belongs to the ligand-gated ion channel (TC 1.A.9) family. Glycine receptor (TC 1.A.9.3) subfamily. GLRA1 sub-subfamily. Interacts with GLRB to form heteropentameric channels; this is probably the predominant form in vivo. Heteropentamer composed of four GLRA1 subunits and one GLRB subunit. Heteropentamer composed of two GLRA1 and three GLRB. Heteropentamer composed of three GLRA1 and two GLRB. Homopentamer (in vitro). Both homopentamers and heteropentamers form functional ion channels, but their characteristics are subtly different.

The protein resides in the postsynaptic cell membrane. Its subcellular location is the synapse. The protein localises to the perikaryon. It localises to the cell projection. It is found in the dendrite. The protein resides in the cell membrane. The enzyme catalyses chloride(in) = chloride(out). With respect to regulation, channel opening is triggered by extracellular glycine. Channel characteristics depend on the subunit composition; heteropentameric channels are activated by lower glycine levels and display faster desensitization. Channel opening is also triggered by taurine and beta-alanine. Channel activity is potentiated by nanomolar concentrations of Zn(2+); half-maximal activation is observed with 37 nM Zn(2+). Inhibited by higher Zn(2+) levels; haf-maximal inhibition occurs at 20 uM Zn(2+). Inhibited by strychnine. Strychnine binding locks the channel in a closed conformation and prevents channel opening in response to extracellular glycine. Inhibited by lindane. Inhibited by picrotoxin. In terms of biological role, subunit of heteromeric glycine-gated chloride channels. Plays an important role in the down-regulation of neuronal excitability. Contributes to the generation of inhibitory postsynaptic currents. Channel activity is potentiated by ethanol. Potentiation of channel activity by intoxicating levels of ethanol contribute to the sedative effects of ethanol. This is Glycine receptor subunit alpha-1 (GLRA1) from Homo sapiens (Human).